We begin with the raw amino-acid sequence, 106 residues long: Large ribosomal subunit protein uL23 (106 aa).

The protein belongs to the universal ribosomal protein uL23 family. Part of the 50S ribosomal subunit. Contacts protein L29, and trigger factor when it is bound to the ribosome.

Functionally, one of the early assembly proteins it binds 23S rRNA. One of the proteins that surrounds the polypeptide exit tunnel on the outside of the ribosome. Forms the main docking site for trigger factor binding to the ribosome. In Acinetobacter baylyi (strain ATCC 33305 / BD413 / ADP1), this protein is Large ribosomal subunit protein uL23.